The primary structure comprises 1850 residues: Chitin synthase V (1850 aa).

A disordered region spans residues 1–27 (MASTLPPLGGGNGGPHTQHSLPSLPAH). One can recognise a Myosin motor domain in the interval 1–779 (MASTLPPLGG…EIAGLVDGSA (779 aa)). An ATP-binding site is contributed by 105 to 112 (GESGSGKS). 5 N-linked (GlcNAc...) asparagine glycosylation sites follow: Asn245, Asn290, Asn427, Asn481, and Asn558. The disordered stretch occupies residues 289 to 309 (NNTSATGDDSGGFSHEGGQTS). Residues 593-647 (SKPMRAPSVMSRKGGRGRGIASQRRQQESNLFDSGNTHAESRSPKGGNKGGIDQG) are disordered. The span at 620-630 (ESNLFDSGNTH) shows a compositional bias: polar residues. Residues 656 to 680 (LDNVQKAVTDPGTNAYFVFCLKPND) are actin-binding. The next 2 helical transmembrane spans lie at 884-904 (WVFTVYFLTWFIPDFLIRWIG) and 923-943 (MLIWFMCLVAAFFIVVFPMLI). The region spanning 947-1006 (QNVFSAAELSSHNGKDGNSAYVSIRGHVIDLGSFADRHYPSFVSRKTMLNYAGMDVSSLF) is the Cytochrome b5 heme-binding domain. 3 N-linked (GlcNAc...) asparagine glycosylation sites follow: Asn1033, Asn1058, and Asn1186. The chain crosses the membrane as a helical span at residues 1196–1216 (LVLAVSILLVSVIAFKFFAAL). N-linked (GlcNAc...) asparagine glycans are attached at residues Asn1453 and Asn1559. Transmembrane regions (helical) follow at residues 1568–1588 (LIPMAQLCGFCCFSMRFVVFI), 1590–1610 (LLSTVVQPVTIAYIVYLIVLV), 1617–1637 (VPITAFILLGAIYGLQAIIFI), and 1644–1664 (MVGWMILYVMAVPVFSFGLPL). The N-linked (GlcNAc...) asparagine glycan is linked to Asn1767. Residues 1800-1850 (LPSDDALLAEIRDILKTADLMTVTKKGIKQELERRFDVPLDAKRAYINSGK) form the DEK-C domain.

It in the N-terminal section; belongs to the TRAFAC class myosin-kinesin ATPase superfamily. Myosin family. This sequence in the C-terminal section; belongs to the chitin synthase family. Class V subfamily. As to expression, expressed in conidia and during appressorium formation.

Its subcellular location is the cell membrane. It localises to the cell septum. The protein resides in the cell tip. The enzyme catalyses [(1-&gt;4)-N-acetyl-beta-D-glucosaminyl](n) + UDP-N-acetyl-alpha-D-glucosamine = [(1-&gt;4)-N-acetyl-beta-D-glucosaminyl](n+1) + UDP + H(+). Its function is as follows. Polymerizes chitin, a structural polymer of the cell wall and septum, by transferring the sugar moiety of UDP-GlcNAc to the non-reducing end of the growing chitin polymer. Contributes to the production of conidia and the ability of fungal conidia to germinate. Involved in the fungal cell wall integrity and the ability of conidia to withstand biophysical pressure. Required for appressorium formation and evasion of insect cellular and/or humoral defenses, promoting the fungal dimorphic transition to the production of hyphal bodies that occurs within hosts, and ultimately to virulence. The protein is Chitin synthase V of Metarhizium acridum (strain CQMa 102).